The chain runs to 119 residues: Ghilanten (119 aa).

Gln-1 carries the pyrrolidone carboxylic acid modification. 10 disulfides stabilise this stretch: Cys-8–Cys-19, Cys-13–Cys-26, Cys-28–Cys-48, Cys-33–Cys-51, Cys-37–Cys-53, Cys-62–Cys-73, Cys-67–Cys-80, Cys-82–Cys-103, Cys-88–Cys-106, and Cys-92–Cys-108. Residues 28–53 (CPEVRCRVYCSHGFQRSRYGCEVCRC) enclose the Antistasin-like 1 domain. The Antistasin-like 2 domain maps to 83 to 108 (KIDINCRKTCPNGLKRDKLGCEYCEC). Heparin is bound by residues 97–100 (KRDK) and 111–118 (KRKLVPRL).

The protein belongs to the protease inhibitor I15 (antistasin) family.

It localises to the secreted. Functionally, this highly disulfide-bonded protein is a potent inhibitor of factor Xa. May have therapeutic utility as an anticoagulant. Also exhibits a strong metastatic activity. This is Ghilanten from Haementeria ghilianii (Amazon leech).